The following is a 128-amino-acid chain: Holo-[acyl-carrier-protein] synthase (128 aa).

Residues D8 and E60 each contribute to the Mg(2+) site.

The protein belongs to the P-Pant transferase superfamily. AcpS family. Mg(2+) serves as cofactor.

The protein localises to the cytoplasm. It catalyses the reaction apo-[ACP] + CoA = holo-[ACP] + adenosine 3',5'-bisphosphate + H(+). Functionally, transfers the 4'-phosphopantetheine moiety from coenzyme A to a Ser of acyl-carrier-protein. This chain is Holo-[acyl-carrier-protein] synthase, found in Anaeromyxobacter dehalogenans (strain 2CP-1 / ATCC BAA-258).